We begin with the raw amino-acid sequence, 330 residues long: Pantothenate kinase (330 aa).

108–115 provides a ligand contact to ATP; sequence GSVAVGKS.

The protein belongs to the prokaryotic pantothenate kinase family.

The protein resides in the cytoplasm. The enzyme catalyses (R)-pantothenate + ATP = (R)-4'-phosphopantothenate + ADP + H(+). Its pathway is cofactor biosynthesis; coenzyme A biosynthesis; CoA from (R)-pantothenate: step 1/5. This Allorhizobium ampelinum (strain ATCC BAA-846 / DSM 112012 / S4) (Agrobacterium vitis (strain S4)) protein is Pantothenate kinase.